A 316-amino-acid chain; its full sequence is MANNEESRGLKSLFDWFANRRKAGATNPERQEREIADGLWHKCSKCGVLTYTKDLRANQMVCVECGHHNRVDSDERIRQLIDQNTWRPMDENLRATDPLQFRDRKAYSDRLREMEDKLGLLDAVKTGLGQINSSPVALAVMDFRFMGGSMGSVVGEKITRLIEQATQRRYPVVIICTSGGARMQEGMLSLMQMAKISAALERHRDARLLYIPVLTNPTTGGVTASFAMLGDIILAEPKATIGFAGRRVIEQTLREKLPDDFQTAEDLLKHGFVDDIVPRTQLKNTLSQLIALHQPVPTTPPMVLWETMSLSSTAVE.

Positions 39 to 308 (LWHKCSKCGV…TPPMVLWETM (270 aa)) constitute a CoA carboxyltransferase N-terminal domain. Residues Cys43, Cys46, Cys62, and Cys65 each contribute to the Zn(2+) site. The segment at 43-65 (CSKCGVLTYTKDLRANQMVCVEC) adopts a C4-type zinc-finger fold.

Belongs to the AccD/PCCB family. As to quaternary structure, acetyl-CoA carboxylase is a heterohexamer composed of biotin carboxyl carrier protein (AccB), biotin carboxylase (AccC) and two subunits each of ACCase subunit alpha (AccA) and ACCase subunit beta (AccD). Zn(2+) is required as a cofactor.

The protein localises to the cytoplasm. It catalyses the reaction N(6)-carboxybiotinyl-L-lysyl-[protein] + acetyl-CoA = N(6)-biotinyl-L-lysyl-[protein] + malonyl-CoA. It functions in the pathway lipid metabolism; malonyl-CoA biosynthesis; malonyl-CoA from acetyl-CoA: step 1/1. Functionally, component of the acetyl coenzyme A carboxylase (ACC) complex. Biotin carboxylase (BC) catalyzes the carboxylation of biotin on its carrier protein (BCCP) and then the CO(2) group is transferred by the transcarboxylase to acetyl-CoA to form malonyl-CoA. The chain is Acetyl-coenzyme A carboxylase carboxyl transferase subunit beta from Nostoc sp. (strain PCC 7120 / SAG 25.82 / UTEX 2576).